Reading from the N-terminus, the 51-residue chain is Insulin (51 aa).

Intrachain disulfides connect Cys-8–Cys-37, Cys-20–Cys-50, and Cys-36–Cys-41.

Belongs to the insulin family. As to quaternary structure, heterodimer of a B chain and an A chain linked by two disulfide bonds.

The protein localises to the secreted. Insulin decreases blood glucose concentration. It increases cell permeability to monosaccharides, amino acids and fatty acids. It accelerates glycolysis, the pentose phosphate cycle, and glycogen synthesis in liver. The protein is Insulin (ins) of Platichthys flesus (European flounder).